A 168-amino-acid chain; its full sequence is uncharacterized protein (168 aa).

Transmembrane regions (helical) follow at residues 41–61 and 133–153; these read LLPW…LFFI and KFVI…FFVL.

Its subcellular location is the cell membrane. This is an uncharacterized protein from Thermotoga maritima (strain ATCC 43589 / DSM 3109 / JCM 10099 / NBRC 100826 / MSB8).